The sequence spans 99 residues: NADH-quinone oxidoreductase subunit K (99 aa).

3 helical membrane passes run 3 to 23 (PENY…GVLL), 28 to 48 (IVVF…FVTF), and 62 to 82 (FFTM…IMII).

This sequence belongs to the complex I subunit 4L family. NDH-1 is composed of 14 different subunits. Subunits NuoA, H, J, K, L, M, N constitute the membrane sector of the complex.

The protein localises to the cell membrane. It catalyses the reaction a quinone + NADH + 5 H(+)(in) = a quinol + NAD(+) + 4 H(+)(out). Functionally, NDH-1 shuttles electrons from NADH, via FMN and iron-sulfur (Fe-S) centers, to quinones in the respiratory chain. The immediate electron acceptor for the enzyme in this species is believed to be a menaquinone. Couples the redox reaction to proton translocation (for every two electrons transferred, four hydrogen ions are translocated across the cytoplasmic membrane), and thus conserves the redox energy in a proton gradient. This is NADH-quinone oxidoreductase subunit K from Rhodococcus erythropolis (strain PR4 / NBRC 100887).